The chain runs to 205 residues: Bcl2-associated agonist of cell death (205 aa).

Residues 1–139 form a disordered region; sequence MGTPKQPSLA…PFRGRSRSAP (139 aa). The residue at position 67 (Ser-67) is a Phosphoserine. Positions 85–98 are enriched in polar residues; it reads IVQQQPGQAANNSH. A Phosphoserine modification is found at Ser-113. Positions 118–128 are enriched in acidic residues; the sequence is TEEDEGMEEEL. Residue Ser-129 is modified to Phosphoserine. Residues Arg-132 and Arg-134 each carry the asymmetric dimethylarginine; by PRMT1 modification. Ser-135 carries the post-translational modification Phosphoserine. Position 137 is a phosphoserine; by PKA, PKB, PAK1, RPS6KA1, RPS6KB1 and PKC/PRKCQ (Ser-137). The BH3 signature appears at 148 to 162; the sequence is YGRELRRMSDEFEGS. 2 positions are modified to phosphoserine: Ser-156 and Ser-171. A disordered region spans residues 161-180; that stretch reads GSFKGLPRPKSAGTATQMRQ.

Belongs to the Bcl-2 family. In terms of assembly, forms heterodimers with the anti-apoptotic proteins, Bcl-X(L), Bcl-2 and Bcl-W. Also binds protein S100A10. The Ser-113/Ser-137 phosphorylated form binds 14-3-3 proteins. Interacts with AKT1 and PIM3. Interacts with HIF3A (via C-terminus domain); the interaction reduces the binding between BAD and BAX. Interacts (via BH3 domain) with NOL3 (via CARD domain); preventing the association of BAD with BCL2. Interacts with GIMAP3/IAN4 and GIMAP5/IAN5. Phosphorylated at one or more of Ser-113, Ser-137, Ser-156 and Ser-171 in response to survival stimuli, which blocks its pro-apoptotic activity. Phosphorylation on Ser-137 or Ser-113 promotes heterodimerization with 14-3-3 proteins. This interaction then facilitates the phosphorylation at Ser-156, a site within the BH3 motif, leading to the release of Bcl-X(L) and the promotion of cell survival. Ser-137 is the major site of AKT/PKB phosphorylation, Ser-156 the major site of protein kinase A (CAPK) phosphorylation. In terms of processing, methylation at Arg-132 and Arg-134 by PRMT1 inhibits Akt-mediated phosphorylation at Ser-137. Expressed in all tissues tested, including brain, liver, spleen and heart. In the brain, restricted to epithelial cells of the choroid plexus. Isoform alpha is the more abundant form.

The protein resides in the mitochondrion outer membrane. The protein localises to the cytoplasm. Functionally, promotes cell death. Successfully competes for the binding to Bcl-X(L), Bcl-2 and Bcl-W, thereby affecting the level of heterodimerization of these proteins with BAX. Can reverse the death repressor activity of Bcl-X(L), but not that of Bcl-2. Appears to act as a link between growth factor receptor signaling and the apoptotic pathways. In Rattus norvegicus (Rat), this protein is Bcl2-associated agonist of cell death (Bad).